Here is a 459-residue protein sequence, read N- to C-terminus: Argininosuccinate lyase (459 aa).

It belongs to the lyase 1 family. Argininosuccinate lyase subfamily.

The protein localises to the cytoplasm. The enzyme catalyses 2-(N(omega)-L-arginino)succinate = fumarate + L-arginine. It functions in the pathway amino-acid biosynthesis; L-arginine biosynthesis; L-arginine from L-ornithine and carbamoyl phosphate: step 3/3. The polypeptide is Argininosuccinate lyase (Buchnera aphidicola subsp. Schizaphis graminum (strain Sg)).